A 303-amino-acid polypeptide reads, in one-letter code: 2-phospho-L-lactate transferase (303 aa).

7,8-didemethyl-8-hydroxy-5-deazariboflavin-binding residues include aspartate 48 and lysine 87.

It belongs to the CofD family. Homodimer. The cofactor is Mg(2+).

It catalyses the reaction (2S)-lactyl-2-diphospho-5'-guanosine + 7,8-didemethyl-8-hydroxy-5-deazariboflavin = oxidized coenzyme F420-0 + GMP + H(+). Its pathway is cofactor biosynthesis; coenzyme F420 biosynthesis. Functionally, catalyzes the transfer of the 2-phospholactate moiety from (2S)-lactyl-2-diphospho-5'-guanosine to 7,8-didemethyl-8-hydroxy-5-deazariboflavin (FO) with the formation of oxidized coenzyme F420-0 and GMP. In Methanosarcina mazei (strain ATCC BAA-159 / DSM 3647 / Goe1 / Go1 / JCM 11833 / OCM 88) (Methanosarcina frisia), this protein is 2-phospho-L-lactate transferase.